Here is a 1563-residue protein sequence, read N- to C-terminus: DNA-directed RNA polymerase subunit beta' (1563 aa).

4 residues coordinate Zn(2+): cysteine 61, cysteine 63, cysteine 76, and cysteine 79. Residues aspartate 588, aspartate 590, and aspartate 592 each contribute to the Mg(2+) site. Zn(2+)-binding residues include cysteine 925, cysteine 999, cysteine 1006, and cysteine 1009.

It belongs to the RNA polymerase beta' chain family. In terms of assembly, the RNAP catalytic core consists of 2 alpha, 1 beta, 1 beta' and 1 omega subunit. When a sigma factor is associated with the core the holoenzyme is formed, which can initiate transcription. Mg(2+) is required as a cofactor. Zn(2+) serves as cofactor.

It carries out the reaction RNA(n) + a ribonucleoside 5'-triphosphate = RNA(n+1) + diphosphate. Functionally, DNA-dependent RNA polymerase catalyzes the transcription of DNA into RNA using the four ribonucleoside triphosphates as substrates. The chain is DNA-directed RNA polymerase subunit beta' from Hydrogenobaculum sp. (strain Y04AAS1).